Consider the following 197-residue polypeptide: Autophagy-related protein 33 (197 aa).

3 consecutive transmembrane segments (helical) span residues 10-30 (GIAV…SLIT), 52-72 (AATA…FGAP), and 78-98 (PYLL…GCAS). 2 positions are modified to phosphoserine: Ser127 and Ser129. Basic and acidic residues predominate over residues 135–148 (EDNHASENTPRDGK). A disordered region spans residues 135–154 (EDNHASENTPRDGKPAATTV). The chain crosses the membrane as a helical span at residues 172 to 192 (LIAATAIAIVGFVQAVIGVYG).

It belongs to the ATG33 family.

It is found in the mitochondrion membrane. Functionally, involved in the selective degradation of mitochondria via autophagy during starvation and at post-log phase. The chain is Autophagy-related protein 33 (ATG33) from Saccharomyces cerevisiae (strain ATCC 204508 / S288c) (Baker's yeast).